The following is a 256-amino-acid chain: Small ribosomal subunit protein eS1 (256 aa).

An N-acetylalanine; partial modification is found at A2.

It belongs to the eukaryotic ribosomal protein eS1 family. In terms of assembly, component of the small ribosomal subunit. Mature ribosomes consist of a small (40S) and a large (60S) subunit. The 40S subunit contains about 33 different proteins and 1 molecule of RNA (18S). The 60S subunit contains about 49 different proteins and 3 molecules of RNA (25S, 5.8S and 5S).

The protein resides in the cytoplasm. The protein is Small ribosomal subunit protein eS1 of Candida tropicalis (strain ATCC MYA-3404 / T1) (Yeast).